The following is a 28-amino-acid chain: Ranatuerin-2AVa (28 aa).

A disulfide bridge connects residues cysteine 23 and cysteine 28.

As to expression, expressed by the skin glands.

The protein localises to the secreted. In terms of biological role, has antibacterial activity against the Gram positive bacterium L.lactis. The chain is Ranatuerin-2AVa from Rana arvalis (Moor frog).